A 22-amino-acid chain; its full sequence is uncharacterized protein (22 aa).

The chain crosses the membrane as a helical span at residues 3 to 22 (MFITGYDINQKQKKRYGLRG).

Belongs to the asfivirus C84L family.

It is found in the host membrane. This is an uncharacterized protein from Ornithodoros (relapsing fever ticks).